Here is a 224-residue protein sequence, read N- to C-terminus: MINQKKIAGEKACEWIEDGMVVGLGTGSTVYYTIEKLGEMVQKGLNITGVSTSIETEQQARTLGIPLKSLNDVTKIDVTIDGADEINQAFQGIKGGGGALLREKMVAQASSKNIWVVGEEKLVTELGKFPLPLEVIPFGWKQIKRMLENDGVETTLRKQSSGEIYETNNGNYILDIINQTFTNPEAWHEKLAGIPGVLEHGLFLHYVDIIICGKASGEIEIIKK.

Substrate-binding positions include 26 to 29 (TGST), 81 to 84 (DGAD), and 94 to 97 (KGGG). Glu103 functions as the Proton acceptor in the catalytic mechanism. Lys121 lines the substrate pocket.

Belongs to the ribose 5-phosphate isomerase family. As to quaternary structure, homodimer.

It catalyses the reaction aldehydo-D-ribose 5-phosphate = D-ribulose 5-phosphate. The protein operates within carbohydrate degradation; pentose phosphate pathway; D-ribose 5-phosphate from D-ribulose 5-phosphate (non-oxidative stage): step 1/1. Its function is as follows. Catalyzes the reversible conversion of ribose-5-phosphate to ribulose 5-phosphate. This chain is Ribose-5-phosphate isomerase A, found in Listeria innocua serovar 6a (strain ATCC BAA-680 / CLIP 11262).